A 494-amino-acid polypeptide reads, in one-letter code: Monocarboxylate transporter 1 (494 aa).

The Cytoplasmic portion of the chain corresponds to 1–22 (MPPAIGGPVGYTPPDGGWGWAV). Residues 23 to 44 (VVGAFISIGFSYAFPKSITVFF) form a helical membrane-spanning segment. K38 is a (S)-lactate binding site. The Extracellular segment spans residues 45–55 (KEIEIIFSATT). A helical transmembrane segment spans residues 56-80 (SEVSWISSIMLAVMYAGGPISSILV). Over 81-84 (NKYG) the chain is Cytoplasmic. Residues 85–105 (SRPVMIAGGCLSGCGLIAASF) form a helical membrane-spanning segment. The Extracellular portion of the chain corresponds to 106–109 (CNTV). The chain crosses the membrane as a helical span at residues 110 to 132 (QELYFCIGVIGGLGLAFNLNPAL). Residues 133 to 146 (TMIGKYFYKKRPLA) are Cytoplasmic-facing. A helical membrane pass occupies residues 147-169 (NGLAMAGSPVFLSTLAPLNQAFF). The Extracellular portion of the chain corresponds to 170-174 (GIFGW). Residues 175-194 (RGSFLILGGLLLNCCVAGSL) traverse the membrane as a helical segment. Residues 195–254 (MRPIGPQQGKVEKLKSKESLQEAGKSDANTDLIGGSPKGEKLSVFQTVNKFLDLSLFTHR) lie on the Cytoplasmic side of the membrane. Residues S210, S213, and S220 each carry the phosphoserine modification. At T224 the chain carries Phosphothreonine. Position 230 is a phosphoserine (S230). The helical transmembrane segment at 255–281 (GFLLYLSGNVVMFFGLFTPLVFLSNYG) threads the bilayer. The Extracellular segment spans residues 282 to 288 (KSKHFSS). A helical membrane pass occupies residues 289–310 (EKSAFLLSILAFVDMVARPSMG). D302 is a binding site for H(+). R306 serves as a coordination point for (S)-lactate. The Cytoplasmic segment spans residues 311 to 321 (LAANTRWIRPR). A helical membrane pass occupies residues 322–342 (VQYFFAASVVANGVCHLLAPL). At 343-346 (STTY) the chain is on the extracellular side. A helical transmembrane segment spans residues 347–368 (VGFCIYAGVFGFAFGWLSSVLF). At 369-382 (ETLMDLVGPQRFSS) the chain is on the cytoplasmic side. A helical transmembrane segment spans residues 383 to 403 (AVGLVTIVECCPVLLGPPLLG). The Extracellular portion of the chain corresponds to 404-414 (RLNDMYGDYKY). Residues 415–436 (TYWACGVILIIAGLYLFIGMGI) traverse the membrane as a helical segment. Residues 437–494 (NYRLVAKEQKAEEKKRDGKEDETSTDVDEKPKKTMKETQSPAPLQNSSGDPAEEESPV) lie on the Cytoplasmic side of the membrane. A compositionally biased stretch (basic and acidic residues) spans 446–472 (KAEEKKRDGKEDETSTDVDEKPKKTMK). The segment at 446–494 (KAEEKKRDGKEDETSTDVDEKPKKTMKETQSPAPLQNSSGDPAEEESPV) is disordered. Position 459 is a phosphothreonine (T459). Position 460 is a phosphoserine (S460). Residue T461 is modified to Phosphothreonine. The span at 473-485 (ETQSPAPLQNSSG) shows a compositional bias: polar residues. Residues S476, S483, S484, and S492 each carry the phosphoserine modification.

It belongs to the major facilitator superfamily. Monocarboxylate porter (TC 2.A.1.13) family. Interacts with BSG. Interacts with EMB. Interaction with either BSG or EMB is required for expression at the cell membrane. In terms of tissue distribution, detected in erythrocytes (at protein level). Detected in brain, heart, kidney, lung, muscle, jejunum enterocytes and brain capillaries.

The protein resides in the cell membrane. Its subcellular location is the basolateral cell membrane. It localises to the apical cell membrane. The catalysed reaction is (S)-lactate(in) + H(+)(in) = (S)-lactate(out) + H(+)(out). It carries out the reaction pyruvate(out) + H(+)(out) = pyruvate(in) + H(+)(in). The enzyme catalyses acetoacetate(out) + H(+)(out) = acetoacetate(in) + H(+)(in). It catalyses the reaction (S)-3-hydroxybutanoate(out) + H(+)(out) = (S)-3-hydroxybutanoate(in) + H(+)(in). The catalysed reaction is (R)-3-hydroxybutanoate(out) + H(+)(out) = (R)-3-hydroxybutanoate(in) + H(+)(in). It carries out the reaction 3-methyl-2-oxobutanoate(out) + H(+)(out) = 3-methyl-2-oxobutanoate(in) + H(+)(in). The enzyme catalyses 4-methyl-2-oxopentanoate(out) + H(+)(out) = 4-methyl-2-oxopentanoate(in) + H(+)(in). Its activity is regulated as follows. Inhibited by stilbene disulfonates, such as di-isothiocyanostilbene disulfonate(DIDS), a cross-linking reagent that forms covalent linkages with lysine groups. In terms of biological role, bidirectional proton-coupled monocarboxylate transporter. Catalyzes the rapid transport across the plasma membrane of many monocarboxylates such as lactate, pyruvate, acetate and the ketone bodies acetoacetate and beta-hydroxybutyrate, and thus contributes to the maintenance of intracellular pH. The transport direction is determined by the proton motive force and the concentration gradient of the substrate monocarboxylate. MCT1 is a major lactate exporter. Plays a role in cellular responses to a high-fat diet by modulating the cellular levels of lactate and pyruvate that contribute to the regulation of central metabolic pathways and insulin secretion, with concomitant effects on plasma insulin levels and blood glucose homeostasis. Facilitates the protonated monocarboxylate form of succinate export, that its transient protonation upon muscle cell acidification in exercising muscle and ischemic heart. Functions via alternate outward- and inward-open conformation states. Protonation and deprotonation of 302-Asp is essential for the conformational transition. The polypeptide is Monocarboxylate transporter 1 (Slc16a1) (Rattus norvegicus (Rat)).